Here is a 378-residue protein sequence, read N- to C-terminus: Queuine tRNA-ribosyltransferase (378 aa).

The Proton acceptor role is filled by Asp-91. Residues 91 to 95 (DSGGF), Asp-145, Gln-197, and Gly-224 each bind substrate. The Nucleophile role is filled by Asp-274. Positions 279-283 (TRLAR) are RNA binding; important for wobble base 34 recognition. Zn(2+)-binding residues include Cys-312, Cys-314, Cys-317, and His-343.

The protein belongs to the queuine tRNA-ribosyltransferase family. Homodimer. Within each dimer, one monomer is responsible for RNA recognition and catalysis, while the other monomer binds to the replacement base PreQ1. It depends on Zn(2+) as a cofactor.

It catalyses the reaction 7-aminomethyl-7-carbaguanine + guanosine(34) in tRNA = 7-aminomethyl-7-carbaguanosine(34) in tRNA + guanine. The protein operates within tRNA modification; tRNA-queuosine biosynthesis. In terms of biological role, catalyzes the base-exchange of a guanine (G) residue with the queuine precursor 7-aminomethyl-7-deazaguanine (PreQ1) at position 34 (anticodon wobble position) in tRNAs with GU(N) anticodons (tRNA-Asp, -Asn, -His and -Tyr). Catalysis occurs through a double-displacement mechanism. The nucleophile active site attacks the C1' of nucleotide 34 to detach the guanine base from the RNA, forming a covalent enzyme-RNA intermediate. The proton acceptor active site deprotonates the incoming PreQ1, allowing a nucleophilic attack on the C1' of the ribose to form the product. After dissociation, two additional enzymatic reactions on the tRNA convert PreQ1 to queuine (Q), resulting in the hypermodified nucleoside queuosine (7-(((4,5-cis-dihydroxy-2-cyclopenten-1-yl)amino)methyl)-7-deazaguanosine). The chain is Queuine tRNA-ribosyltransferase from Methylacidiphilum infernorum (isolate V4) (Methylokorus infernorum (strain V4)).